Consider the following 353-residue polypeptide: Suppressor of RNA-mediated gene silencing (353 aa).

Belongs to the phytoreovirus non-structural protein 10 family.

Its function is as follows. Suppressor of RNA-mediated gene silencing, also known as post-transcriptional gene silencing (PTGS), a mechanism of plant viral defense that limits the accumulation of viral RNAs. This Rice dwarf virus (isolate Fujian) (RDV) protein is Suppressor of RNA-mediated gene silencing.